The following is a 466-amino-acid chain: tRNA dimethylallyltransferase 2 (466 aa).

An ATP-binding site is contributed by 27 to 34 (GPTGSGKS). 29–34 (TGSGKS) contacts substrate. Residues 52 to 55 (DAMQ) are interaction with substrate tRNA. Positions 433-466 (WEHHKQGRTHRKRTTRHKNSQTYKNREVQEAEVN) are disordered. Basic residues predominate over residues 437–451 (KQGRTHRKRTTRHKN). A compositionally biased stretch (basic and acidic residues) spans 456–466 (KNREVQEAEVN).

Belongs to the IPP transferase family. Requires Mg(2+) as cofactor. Expressed ubiquitously, with highest expression in proliferating tissues.

The protein localises to the cytoplasm. It catalyses the reaction adenosine(37) in tRNA + dimethylallyl diphosphate = N(6)-dimethylallyladenosine(37) in tRNA + diphosphate. Catalyzes the transfer of a dimethylallyl group onto the adenine at position 37 in tRNAs that read codons beginning with uridine, leading to the formation of N6-(dimethylallyl)adenosine (i(6)A). Involved in the cis-type cytokinin biosynthesis. The sequence is that of tRNA dimethylallyltransferase 2 (IPT2) from Arabidopsis thaliana (Mouse-ear cress).